Reading from the N-terminus, the 35-residue chain is Cecropin-A (35 aa).

Leu-35 carries the post-translational modification Leucine amide.

As to quaternary structure, monomer. Hemolymph.

It is found in the secreted. In terms of biological role, cecropins have lytic and antibacterial activity against several Gram-positive and Gram-negative bacteria. Also has activity against fungi. This is Cecropin-A from Heliothis virescens (Tobacco budworm moth).